A 394-amino-acid chain; its full sequence is Penicillopepsin-3 (394 aa).

A signal peptide spans 1-20 (MVSFTQLQLAFLGLSALGAA). Positions 21–70 (VPVTGTSEKKTFSLNQVKVAGTKTKNPAEHYANALRKYGAEVPSHVLAAA) are cleaved as a propeptide — activation peptide. The Peptidase A1 domain occupies 87–392 (YLTPIDVGGT…DASGPRLGFA (306 aa)). Catalysis depends on residues aspartate 103 and aspartate 284. A disulfide bond links cysteine 320 and cysteine 355.

It belongs to the peptidase A1 family. As to quaternary structure, monomer.

The protein localises to the secreted. It carries out the reaction Hydrolysis of proteins with broad specificity similar to that of pepsin A, preferring hydrophobic residues at P1 and P1', but also cleaving 20-Gly-|-Glu-21 in the B chain of insulin. Clots milk, and activates trypsinogen.. Secreted aspartic endopeptidase that allows assimilation of proteinaceous substrates. The scissile peptide bond is attacked by a nucleophilic water molecule activated by two aspartic residues in the active site. Shows a broad primary substrate specificity. Favors hydrophobic residues at the P1 and P1' positions, but can also activate trypsinogen and hydrolyze the B chain of insulin between positions 'Gly-20' and 'Glu-21'. This chain is Penicillopepsin-3, found in Penicillium janthinellum (Penicillium vitale).